Consider the following 220-residue polypeptide: Orotate phosphoribosyltransferase (220 aa).

K26 is a binding site for 5-phospho-alpha-D-ribose 1-diphosphate. 34-35 (FF) provides a ligand contact to orotate. 5-phospho-alpha-D-ribose 1-diphosphate-binding positions include 72–73 (YK), R101, K102, K105, H107, and 126–134 (DDVITAGTS). Orotate contacts are provided by T130 and R158.

The protein belongs to the purine/pyrimidine phosphoribosyltransferase family. PyrE subfamily. As to quaternary structure, homodimer. Mg(2+) serves as cofactor.

The catalysed reaction is orotidine 5'-phosphate + diphosphate = orotate + 5-phospho-alpha-D-ribose 1-diphosphate. It participates in pyrimidine metabolism; UMP biosynthesis via de novo pathway; UMP from orotate: step 1/2. Catalyzes the transfer of a ribosyl phosphate group from 5-phosphoribose 1-diphosphate to orotate, leading to the formation of orotidine monophosphate (OMP). This Bordetella avium (strain 197N) protein is Orotate phosphoribosyltransferase.